The sequence spans 436 residues: MRVFFKTYGCQMNLNDTETMAGILSQHGYEVVNLPEEADIVILNTCVVRQKSQEKYHSALGQFVKLKKSGKIKLIGIAGCGSNLEGEELIKSGADFVIGSRSIGKIAEVLQKAARGEKIVYLEDDICTVDSKTPRMRFSKHHAWITIIHGCNRFCTYCIVPYTRGREKSRPLPDVLLEVEKLAKNGVKEITFLGQNVDAYGKDLKDGTNLASLIEQAGKFEQIKRIWFLTSYPTDITDKLIETVAEDPKAAKSFHIPVQSGSNRILRLMNRRYDRDQFLQLVEKIRSKIPHASISSDIIVGFPTETEYDYMQTMDLVRKARFERLNLAVYSPRQGTVASKYFKDDVPREEKVQRLNKLLELQKQINRELNMQYLGKVVEIIVEGKTKEGLYYGRDIRNKVIIFSSQEVSEGENVLLKIDKITAGPLYGKLQKKCGL.

Positions 1–115 (MRVFFKTYGC…IAEVLQKAAR (115 aa)) constitute an MTTase N-terminal domain. Residues cysteine 10, cysteine 46, cysteine 80, cysteine 151, cysteine 155, and cysteine 158 each coordinate [4Fe-4S] cluster. Residues 137-368 (RFSKHHAWIT…LELQKQINRE (232 aa)) enclose the Radical SAM core domain. The region spanning 371 to 432 (MQYLGKVVEI…AGPLYGKLQK (62 aa)) is the TRAM domain.

The protein belongs to the methylthiotransferase family. MiaB subfamily. Monomer. Requires [4Fe-4S] cluster as cofactor.

Its subcellular location is the cytoplasm. It carries out the reaction N(6)-dimethylallyladenosine(37) in tRNA + (sulfur carrier)-SH + AH2 + 2 S-adenosyl-L-methionine = 2-methylsulfanyl-N(6)-dimethylallyladenosine(37) in tRNA + (sulfur carrier)-H + 5'-deoxyadenosine + L-methionine + A + S-adenosyl-L-homocysteine + 2 H(+). Its function is as follows. Catalyzes the methylthiolation of N6-(dimethylallyl)adenosine (i(6)A), leading to the formation of 2-methylthio-N6-(dimethylallyl)adenosine (ms(2)i(6)A) at position 37 in tRNAs that read codons beginning with uridine. In Pseudothermotoga lettingae (strain ATCC BAA-301 / DSM 14385 / NBRC 107922 / TMO) (Thermotoga lettingae), this protein is tRNA-2-methylthio-N(6)-dimethylallyladenosine synthase.